Consider the following 72-residue polypeptide: uncharacterized protein (72 aa).

The helical transmembrane segment at 23–45 (ITNLLITTILLCFFNATTYWKLF) threads the bilayer.

It localises to the membrane. This is an uncharacterized protein from Schizosaccharomyces pombe (strain 972 / ATCC 24843) (Fission yeast).